The following is a 486-amino-acid chain: Glutamate--tRNA ligase 2 (486 aa).

The 'HIGH' region signature appears at 12 to 22 (PSPTGELHIGN). Positions 252-256 (KLSKR) match the 'KMSKS' region motif. K255 contacts ATP.

It belongs to the class-I aminoacyl-tRNA synthetase family. Glutamate--tRNA ligase type 1 subfamily. In terms of assembly, monomer.

It is found in the cytoplasm. It carries out the reaction tRNA(Glu) + L-glutamate + ATP = L-glutamyl-tRNA(Glu) + AMP + diphosphate. In terms of biological role, catalyzes the attachment of glutamate to tRNA(Glu) in a two-step reaction: glutamate is first activated by ATP to form Glu-AMP and then transferred to the acceptor end of tRNA(Glu). The chain is Glutamate--tRNA ligase 2 from Syntrophus aciditrophicus (strain SB).